The chain runs to 94 residues: Large ribosomal subunit protein bL27 (94 aa).

Positions 1-9 (MLRLDLQFF) are excised as a propeptide.

It belongs to the bacterial ribosomal protein bL27 family. Part of the 50S ribosomal subunit. The N-terminus is cleaved by ribosomal processing cysteine protease Prp.

Plays a role in sporulation at high temperatures. The polypeptide is Large ribosomal subunit protein bL27 (rpmA) (Bacillus subtilis (strain 168)).